We begin with the raw amino-acid sequence, 167 residues long: Protein FAM163B (167 aa).

A helical transmembrane segment spans residues 6–26; it reads VVITGGILATVILLCIIAVLC. Residue Ser-40 is modified to Phosphoserine.

The protein belongs to the FAM163 family.

Its subcellular location is the membrane. The chain is Protein FAM163B (Fam163b) from Mus musculus (Mouse).